We begin with the raw amino-acid sequence, 491 residues long: UDP-N-acetylmuramate--L-alanine ligase (491 aa).

126-132 is a binding site for ATP; that stretch reads GTHGKTT.

The protein belongs to the MurCDEF family.

The protein localises to the cytoplasm. The enzyme catalyses UDP-N-acetyl-alpha-D-muramate + L-alanine + ATP = UDP-N-acetyl-alpha-D-muramoyl-L-alanine + ADP + phosphate + H(+). It participates in cell wall biogenesis; peptidoglycan biosynthesis. Cell wall formation. The sequence is that of UDP-N-acetylmuramate--L-alanine ligase from Escherichia coli O7:K1 (strain IAI39 / ExPEC).